We begin with the raw amino-acid sequence, 461 residues long: Nuclear distribution protein PAC1 (461 aa).

A LisH domain is found at 9–41 (QAEELHKSIIAYLTANNLLDTANTLRAELNLNE). Residues 61–88 (TSVVRLQKKIMDLESRMSAMQAELDNAT) are a coiled coil. WD repeat units lie at residues 114-155 (SHRD…RTIK), 157-197 (HTRA…KNIR), 201-248 (GHDH…CLRT), 251-290 (GHTA…PETK), 312-355 (QYLS…LLTL), 357-396 (GHDN…KCIK), 401-446 (AHER…IRCV), and 448-461 (ATGG…IFAN).

This sequence belongs to the WD repeat LIS1/nudF family. As to quaternary structure, self-associates. Interacts with NDL1 and dynein.

The protein resides in the cytoplasm. It is found in the cytoskeleton. Its subcellular location is the spindle pole. Its function is as follows. Positively regulates the activity of the minus-end directed microtubule motor protein dynein. May enhance dynein-mediated microtubule sliding by targeting dynein to the microtubule plus end. Required for nuclear migration during vegetative growth as well as development. Required for retrograde early endosome (EE) transport from the hyphal tip. Required for localization of dynein to the mitotic spindle poles. Recruits additional proteins to the dynein complex at SPBs. In Arthroderma benhamiae (strain ATCC MYA-4681 / CBS 112371) (Trichophyton mentagrophytes), this protein is Nuclear distribution protein PAC1.